Here is a 569-residue protein sequence, read N- to C-terminus: MRFSKTFIPTMKENPKDAVLPSHIYLVRGGFITQVASGIYNFLPIGKKVLDKIRAIVKEELDKAGCQEVSLGFVTPCELWEESGRLGKYGKELLRFKDRKENCFVLGPTHEEMMVDLVRNRVTSYKQLPLNLYQINWKFRDEARPRFGLLRGREFLMKDGYSFHADEEDMRREYDLMEKTYRNIFGRLGLRFRAVEADVGAIGGNASKEFMVLAESGEDTIAICTECEYAANVEAAKRKKTKAPAEAPEFSNFEPFYTPNLSSIDELSDFFKVHPYYFVKAVAKKALYDEGEEIVLFFLRGSDELQEVKASNAIGANEMVDVSEEELEKSGIVPGFIAPYEQKCKIVLDEDLKGAKGLICGGNKKDYHLIGADLSQFDDALFVDIAQVKEGDLCPKCGAVMKLTKGIEVGHIFQLGTRYSAAMNATFLDKDGKAKPFVMGTYGIGVSRLVAASIEQNHDERGCIWPLQIAPFEVDIIVSNIKDEEQIAFGEELYEQLKNAGVDVILDDRPERFGPKIKDFELIGFPYGIIVGKGLKEGTVQIVQRETLDKVEIPKEDVFKTILEKVQAS.

This sequence belongs to the class-II aminoacyl-tRNA synthetase family. ProS type 1 subfamily. In terms of assembly, homodimer.

It localises to the cytoplasm. It carries out the reaction tRNA(Pro) + L-proline + ATP = L-prolyl-tRNA(Pro) + AMP + diphosphate. In terms of biological role, catalyzes the attachment of proline to tRNA(Pro) in a two-step reaction: proline is first activated by ATP to form Pro-AMP and then transferred to the acceptor end of tRNA(Pro). As ProRS can inadvertently accommodate and process non-cognate amino acids such as alanine and cysteine, to avoid such errors it has two additional distinct editing activities against alanine. One activity is designated as 'pretransfer' editing and involves the tRNA(Pro)-independent hydrolysis of activated Ala-AMP. The other activity is designated 'posttransfer' editing and involves deacylation of mischarged Ala-tRNA(Pro). The misacylated Cys-tRNA(Pro) is not edited by ProRS. The sequence is that of Proline--tRNA ligase from Nitratiruptor sp. (strain SB155-2).